The primary structure comprises 257 residues: Phosphonates import ATP-binding protein PhnC (257 aa).

The ABC transporter domain maps to isoleucine 4 to isoleucine 248. Glycine 37–serine 44 serves as a coordination point for ATP.

This sequence belongs to the ABC transporter superfamily. Phosphonates importer (TC 3.A.1.9.1) family. In terms of assembly, the complex is composed of two ATP-binding proteins (PhnC), two transmembrane proteins (PhnE) and a solute-binding protein (PhnD).

Its subcellular location is the cell membrane. The enzyme catalyses phosphonate(out) + ATP + H2O = phosphonate(in) + ADP + phosphate + H(+). Its function is as follows. Part of the ABC transporter complex PhnCDE involved in phosphonates import. Responsible for energy coupling to the transport system. This is Phosphonates import ATP-binding protein PhnC from Staphylococcus aureus (strain MRSA252).